The sequence spans 146 residues: Ribonuclease H (146 aa).

One can recognise an RNase H type-1 domain in the interval 1-142; sequence MNKIIIYTDG…ADALANLAMD (142 aa). Asp-9, Glu-47, Asp-70, and Asp-134 together coordinate Mg(2+).

Belongs to the RNase H family. As to quaternary structure, monomer. Requires Mg(2+) as cofactor.

The protein localises to the cytoplasm. The catalysed reaction is Endonucleolytic cleavage to 5'-phosphomonoester.. Endonuclease that specifically degrades the RNA of RNA-DNA hybrids. The polypeptide is Ribonuclease H (Ruthia magnifica subsp. Calyptogena magnifica).